A 313-amino-acid polypeptide reads, in one-letter code: Ribosomal RNA small subunit methyltransferase H (313 aa).

S-adenosyl-L-methionine is bound by residues 35 to 37 (GGH), aspartate 55, phenylalanine 79, aspartate 101, and glutamine 108.

The protein belongs to the methyltransferase superfamily. RsmH family.

Its subcellular location is the cytoplasm. The catalysed reaction is cytidine(1402) in 16S rRNA + S-adenosyl-L-methionine = N(4)-methylcytidine(1402) in 16S rRNA + S-adenosyl-L-homocysteine + H(+). Specifically methylates the N4 position of cytidine in position 1402 (C1402) of 16S rRNA. The sequence is that of Ribosomal RNA small subunit methyltransferase H from Klebsiella pneumoniae (strain 342).